We begin with the raw amino-acid sequence, 121 residues long: Small ribosomal subunit protein uS13 (121 aa).

Residues 94–121 (GLPVRGQNTKNNARTRKGPRRTVANKKK) are disordered. Over residues 106–121 (ARTRKGPRRTVANKKK) the composition is skewed to basic residues.

It belongs to the universal ribosomal protein uS13 family. In terms of assembly, part of the 30S ribosomal subunit. Forms a loose heterodimer with protein S19. Forms two bridges to the 50S subunit in the 70S ribosome.

Its function is as follows. Located at the top of the head of the 30S subunit, it contacts several helices of the 16S rRNA. In the 70S ribosome it contacts the 23S rRNA (bridge B1a) and protein L5 of the 50S subunit (bridge B1b), connecting the 2 subunits; these bridges are implicated in subunit movement. Contacts the tRNAs in the A and P-sites. The sequence is that of Small ribosomal subunit protein uS13 from Geobacillus kaustophilus (strain HTA426).